Consider the following 249-residue polypeptide: UPF0524 protein C3orf70 homolog B (249 aa).

The interval 174–230 (GPKMGHCSSPSTSEDSGINALGGHFLESCEEESEEEDELSTDGHSSPGSLWDQDECT) is disordered. The segment covering 201–213 (SCEEESEEEDELS) has biased composition (acidic residues).

The protein belongs to the UPF0524 family.

Functionally, plays a role in neuronal and neurobehavioral development. Required for normal expression of the postmitotic and mature neuron markers elavl3 and eno2 and neurobehaviors related to circadian rhythm and altered light-dark conditions. The sequence is that of UPF0524 protein C3orf70 homolog B from Danio rerio (Zebrafish).